The primary structure comprises 145 residues: Large ribosomal subunit protein uL13 (145 aa).

The protein belongs to the universal ribosomal protein uL13 family. In terms of assembly, part of the 50S ribosomal subunit.

In terms of biological role, this protein is one of the early assembly proteins of the 50S ribosomal subunit, although it is not seen to bind rRNA by itself. It is important during the early stages of 50S assembly. The sequence is that of Large ribosomal subunit protein uL13 from Bacillus pumilus (strain SAFR-032).